The sequence spans 397 residues: MARAGARGLLGGRRPPGLRLALALRLALLLARPPSGRAGAPEAQGPAAPGTTAPEGGDRCRGYYDVMGQWDPPFNCSSGAYSFCCGTCGYRFCCHDGPRRLDQSRCSNYDTPAWVQTGRPPARARDTAAPRDPGRERSHTAVYAVCGVAALLVLAGIGARLGLERAHSPRARRTVTRALTELLKQPGPQEPLPPTLGPPLGGCVQVQMGDGLPRGSPHNSADKKRLNNAPRGSAAPGPPRGPRLQGGGSLTLQPDYAKYATFKAAALKAAEAAPRDFCQRFPALEPSPRQPPARAPRPSPDLPAPLDACPWAPPVYAPPAAPGPYAAWTSSRPARPAPLSHPTARAFQVPRRPGHAARRQFSVKMPETFNPQLPGLYGSAGRGSRYLRTNSKTEVTV.

The N-terminal stretch at 1–38 (MARAGARGLLGGRRPPGLRLALALRLALLLARPPSGRA) is a signal peptide. The Extracellular portion of the chain corresponds to 39–138 (GAPEAQGPAA…APRDPGRERS (100 aa)). N-linked (GlcNAc...) asparagine glycosylation occurs at N75. Residues 117-136 (TGRPPARARDTAAPRDPGRE) form a disordered region. Residues 123–136 (RARDTAAPRDPGRE) show a composition bias toward basic and acidic residues. Residues 139–159 (HTAVYAVCGVAALLVLAGIGA) form a helical membrane-spanning segment. At 160-397 (RLGLERAHSP…RTNSKTEVTV (238 aa)) the chain is on the cytoplasmic side. Disordered stretches follow at residues 182-250 (LLKQ…GGSL) and 281-303 (FPALEPSPRQPPARAPRPSPDLP). Pro residues-rich tracts occupy residues 188 to 197 (PQEPLPPTLG) and 288 to 303 (PRQPPARAPRPSPDLP).

This sequence belongs to the shisa family. Interacts with AMPAR subunits GRIA1 and GRIA2.

The protein resides in the membrane. May regulate trafficking and current kinetics of AMPA-type glutamate receptor (AMPAR) at synapses. This Homo sapiens (Human) protein is Protein shisa-8.